Reading from the N-terminus, the 475-residue chain is Glycogen synthase (475 aa).

Lys15 provides a ligand contact to ADP-alpha-D-glucose.

It belongs to the glycosyltransferase 1 family. Bacterial/plant glycogen synthase subfamily.

It carries out the reaction [(1-&gt;4)-alpha-D-glucosyl](n) + ADP-alpha-D-glucose = [(1-&gt;4)-alpha-D-glucosyl](n+1) + ADP + H(+). It participates in glycan biosynthesis; glycogen biosynthesis. Functionally, synthesizes alpha-1,4-glucan chains using ADP-glucose. The polypeptide is Glycogen synthase (Clostridium kluyveri (strain ATCC 8527 / DSM 555 / NBRC 12016 / NCIMB 10680 / K1)).